The following is a 583-amino-acid chain: 2-succinyl-5-enolpyruvyl-6-hydroxy-3-cyclohexene-1-carboxylate synthase (583 aa).

This sequence belongs to the TPP enzyme family. MenD subfamily. Homodimer. It depends on Mg(2+) as a cofactor. Mn(2+) serves as cofactor. Thiamine diphosphate is required as a cofactor.

It carries out the reaction isochorismate + 2-oxoglutarate + H(+) = 5-enolpyruvoyl-6-hydroxy-2-succinyl-cyclohex-3-ene-1-carboxylate + CO2. Its pathway is quinol/quinone metabolism; 1,4-dihydroxy-2-naphthoate biosynthesis; 1,4-dihydroxy-2-naphthoate from chorismate: step 2/7. It participates in quinol/quinone metabolism; menaquinone biosynthesis. Catalyzes the thiamine diphosphate-dependent decarboxylation of 2-oxoglutarate and the subsequent addition of the resulting succinic semialdehyde-thiamine pyrophosphate anion to isochorismate to yield 2-succinyl-5-enolpyruvyl-6-hydroxy-3-cyclohexene-1-carboxylate (SEPHCHC). This Chlorobium phaeovibrioides (strain DSM 265 / 1930) (Prosthecochloris vibrioformis (strain DSM 265)) protein is 2-succinyl-5-enolpyruvyl-6-hydroxy-3-cyclohexene-1-carboxylate synthase.